A 149-amino-acid chain; its full sequence is Calmodulin, striated muscle (149 aa).

EF-hand domains follow at residues 8-43 (EQIAEFKEAFSLFDRDGDGCITTMELGTVMRSLGQN), 44-79 (PTEAELQDMVGEVDADGSGTIDFPEFLSLMARKMRD), 81-116 (DSEEEIREAFRVFDKDGNGYISAAELRHVMTNLGEK), and 117-149 (LTDEEVDEMIKEADCNNDGQVNYEEFVRMMTEK). Residues aspartate 21, aspartate 23, aspartate 25, cysteine 27, glutamate 32, aspartate 57, aspartate 59, serine 61, threonine 63, glutamate 68, aspartate 94, aspartate 96, asparagine 98, tyrosine 100, and glutamate 105 each contribute to the Ca(2+) site. At lysine 116 the chain carries N6,N6,N6-trimethyllysine. The Ca(2+) site is built by aspartate 130, asparagine 132, aspartate 134, glutamine 136, and glutamate 141.

The protein belongs to the calmodulin family.

The protein is Calmodulin, striated muscle (CCM1) of Gallus gallus (Chicken).